The following is a 375-amino-acid chain: Glutamate 5-kinase (375 aa).

Lys17 contacts ATP. Residues Ser57, Asp144, and Asn158 each contribute to the substrate site. 178-179 (TD) contributes to the ATP binding site. The 77-residue stretch at 284–360 (SGSIVVDTGA…NEIADILGYK (77 aa)) folds into the PUA domain.

It belongs to the glutamate 5-kinase family.

Its subcellular location is the cytoplasm. The catalysed reaction is L-glutamate + ATP = L-glutamyl 5-phosphate + ADP. It participates in amino-acid biosynthesis; L-proline biosynthesis; L-glutamate 5-semialdehyde from L-glutamate: step 1/2. Functionally, catalyzes the transfer of a phosphate group to glutamate to form L-glutamate 5-phosphate. The polypeptide is Glutamate 5-kinase (Methanococcoides burtonii (strain DSM 6242 / NBRC 107633 / OCM 468 / ACE-M)).